We begin with the raw amino-acid sequence, 374 residues long: PqqA peptide cyclase (374 aa).

The Radical SAM core domain maps to 13–230; that stretch reads VPAPIAMLAE…EAEARLRGTL (218 aa). Cys-27, Cys-31, and Cys-34 together coordinate [4Fe-4S] cluster.

It belongs to the radical SAM superfamily. PqqE family. Interacts with PqqD. The interaction is necessary for activity of PqqE. [4Fe-4S] cluster is required as a cofactor.

The catalysed reaction is [PQQ precursor protein] + S-adenosyl-L-methionine = E-Y cross-linked-[PQQ precursor protein] + 5'-deoxyadenosine + L-methionine + H(+). It functions in the pathway cofactor biosynthesis; pyrroloquinoline quinone biosynthesis. Its function is as follows. Catalyzes the cross-linking of a glutamate residue and a tyrosine residue in the PqqA protein as part of the biosynthesis of pyrroloquinoline quinone (PQQ). In Ruegeria pomeroyi (strain ATCC 700808 / DSM 15171 / DSS-3) (Silicibacter pomeroyi), this protein is PqqA peptide cyclase.